We begin with the raw amino-acid sequence, 72 residues long: Probable movement protein p8 (72 aa).

A disordered region spans residues 16 to 58 (GRARSVEGKKHNGSGLTGVKRHAVSETSQKSQQGTGNGTMTNI). Positions 40–58 (SETSQKSQQGTGNGTMTNI) are enriched in polar residues.

The protein belongs to the carmovirus/necrovirus/panicovirus movement protein p8 family.

In terms of biological role, cell-to-cell movement. This is Probable movement protein p8 from Tobacco necrosis virus (strain A) (TNV-A).